The primary structure comprises 658 residues: Probable mitochondrial Rho GTPase gemA (658 aa).

The Cytoplasmic segment spans residues 1–633 (MKNNIKVILI…NGSNGSNNSN (633 aa)). Residues 2-175 (KNNIKVILIG…LYASQTSVFF (174 aa)) form the Miro 1 domain. GTP contacts are provided by residues 11 to 18 (GDEQVGKS), 57 to 62 (DTFDDG), and 118 to 121 (NKLD). 2 EF-hand domains span residues 191–226 (GCER…CGHE) and 311–346 (MGNE…TPKI). Residues D204, D206, D208, S210, E215, D324, D326, D328, and D335 each contribute to the Ca(2+) site. Residues 420 to 616 (RNIVNCYVFG…YHEMMETIVN (197 aa)) form the Miro 2 domain. GTP contacts are provided by residues 429–436 (GAEAVGKT), 466–468 (LLK), and 530–533 (TKNN). The segment at 532 to 575 (NNNNNNNNNNNNNNNNNNNNLNNNNNNINNNNNNNNNNTTTTNA) is disordered. The chain crosses the membrane as a helical; Anchor for type IV membrane protein span at residues 634 to 656 (ILTYLVIAAGVAGVGLLLSKYLA). Over 657 to 658 (KK) the chain is Mitochondrial intermembrane.

It belongs to the mitochondrial Rho GTPase family.

Its subcellular location is the mitochondrion outer membrane. Functionally, mitochondrial GTPase involved in mitochondrial trafficking. Probably involved in control of anterograde transport of mitochondria and their subcellular distribution. The chain is Probable mitochondrial Rho GTPase gemA (gemA) from Dictyostelium discoideum (Social amoeba).